Here is a 172-residue protein sequence, read N- to C-terminus: Exocyst complex component 1-like (172 aa).

The protein is Exocyst complex component 1-like of Mus musculus (Mouse).